The primary structure comprises 146 residues: MLNPRRTRFRKQHRGRMRGISTRGNRICFGKFALQALEPTWITARQIEAGRRAITRYARRGGKLWIRIFPDKPITMRPAETRMGSGKGSPEYWVSVVKPGRILYEISGVSENVARAAMKIAAYKMPIRTQFITTIKMKESILDRKE.

The protein belongs to the universal ribosomal protein uL16 family. As to quaternary structure, part of the 50S ribosomal subunit.

It is found in the plastid. It localises to the chloroplast. This is Large ribosomal subunit protein uL16c from Angiopteris evecta (Mule's foot fern).